The sequence spans 124 residues: uncharacterized protein (124 aa).

The protein belongs to the asfivirus H124R family.

It localises to the virion. This is an uncharacterized protein from Ornithodoros (relapsing fever ticks).